The following is a 185-amino-acid chain: Coordinator of PRMT5 and differentiation stimulator (185 aa).

At Met-1 the chain carries N-acetylmethionine. The interval 1-109 is disordered; the sequence is MDPPTAGAQS…MSGCLPKEQA (109 aa). Basic and acidic residues-rich tracts occupy residues 42-52 and 66-77; these read SSQEKATENAT and SPAHGEGTHCEE. Position 66 is a phosphoserine (Ser-66). A compositionally biased stretch (acidic residues) spans 78–89; that stretch reads EGFAEDDEDSDG.

As to quaternary structure, interacts with PRMT5. Interacts with histone H4; specifically interacts with the N-terminus of histone H4 but not with histone H3. Interacts with CBFB. Found in a complex with PRMT5, RUNX1 and CBFB.

Its subcellular location is the nucleus. In terms of biological role, histone-binding protein required for histone H4 methyltransferase activity of PRMT5. Specifically required for histone H4 'Arg-3' methylation mediated by PRMT5, but not histone H3 'Arg-8' methylation, suggesting that it modulates the substrate specificity of PRMT5. Specifically interacts with the N-terminus of histone H4 but not with histone H3, suggesting that it acts by promoting the association between histone H4 and PRMT5. Involved in CCNE1 promoter repression. Plays a role in muscle cell differentiation by modulating the recruitment of PRMT5 to the promoter of genes involved in the coordination between cell cycle exit and muscle differentiation. This is Coordinator of PRMT5 and differentiation stimulator (COPRS) from Bos taurus (Bovine).